We begin with the raw amino-acid sequence, 221 residues long: Protein RER1D (221 aa).

The next 4 helical transmembrane spans lie at 41–58 (IVRR…YIYR), 64–84 (GYFV…IGFL), 128–148 (FVVA…FWPI), and 149–169 (LLCY…VHMF). Residues 200-221 (KGDGGDDRPSSSNSSQGNEKQD) form a disordered region. Polar residues predominate over residues 209–221 (SSSNSSQGNEKQD).

It belongs to the RER1 family.

It localises to the membrane. Functionally, involved in the retrieval of endoplasmic reticulum membrane proteins from the early Golgi compartment. This chain is Protein RER1D, found in Arabidopsis thaliana (Mouse-ear cress).